Here is a 688-residue protein sequence, read N- to C-terminus: MTAVPAPRSLFVLLQVLWLALAQIRGPPGEPGPPGPPGPPGVPGSDGIDGDKGPPGKVGPPGSKGEPGKPGPDGPDGKPGIDGLMGAKGEPGPVGTPGVKGQPGLPGPPGLPGPGFAGPPGPPGPVGLPGEIGTPGPKGDPGPEGPSGPPGPPGKPGRPGTIQGLEGSADFLCPTNCPAGVKGPQGLQGVKGHPGKRGILGDPGRQGKPGPKGDVGASGEQGIPGPPGPQGIRGYPGMAGPKGEMGPRGYKGMVGSIGAAGPPGEEGPRGPPGEAGEKGDVGSQGARGPQGITGPKGITGPPGIDGKDGTPGIPGMKGSAGQVGRPGSPGHQGLAGVPGQPGTKGGPGDKGEPGQQGLPGVSGPPGKEGEPGPRGEIGPQGIMGQKGDQGERGPVGQPGPQGRQGPKGEQGPPGIPGPQGLPGIKGDKGSPGKTGPRGGVGDPGVAGLPGEKGEKGQSGEPGLKGQQGVRGETGYPGPSGDIGAPGVQGYPGLPGPRGLVGDRGVPGQPGRQGVVGRAASDQHIVDVVLKMIQEQLAEVAVSAKREALGAAGMVGLPGPPGPPGYPGKQGPNGHPGPRGIPGIVGAVGQIGNTGPKGKRGEKGDRGEMGHGHPGMPGPPGIPGLPGRPGQAINGKDGDRGSPGAPGEAGRPGRPGPVGLPGFCEPAACLGASAYTSARLTEPGSIKGP.

The signal sequence occupies residues 1–22 (MTAVPAPRSLFVLLQVLWLALA). The triple-helical region 4 (COL4) stretch occupies residues 26–162 (GPPGEPGPPG…PGKPGRPGTI (137 aa)). The interval 26 to 171 (GPPGEPGPPG…IQGLEGSADF (146 aa)) is disordered. Pro residues-rich tracts occupy residues 28 to 42 (PGEP…PPGV) and 105 to 126 (LPGP…PGPV). Residues 128–137 (LPGEIGTPGP) are compositionally biased toward low complexity. Residues 138–156 (KGDPGPEGPSGPPGPPGKP) show a composition bias toward pro residues. 4-hydroxyproline is present on proline 159. The interval 163–179 (QGLEGSADFLCPTNCPA) is nonhelical region 4 (NC4). An O-linked (Xyl...) (glycosaminoglycan) serine glycan is attached at serine 168. The segment at 180-518 (GVKGPQGLQG…PGRQGVVGRA (339 aa)) is triple-helical region 3 (COL3). Lysine 182 bears the 5-hydroxylysine mark. The O-linked (Gal...) hydroxylysine glycan is linked to lysine 182. Positions 183 to 517 (GPQGLQGVKG…QPGRQGVVGR (335 aa)) are disordered. 2 stretches are compositionally biased toward low complexity: residues 289-314 (PQGI…PGIP) and 392-412 (RGPV…EQGP). Gly residues predominate over residues 435–444 (GPRGGVGDPG). The segment covering 502-517 (DRGVPGQPGRQGVVGR) has biased composition (low complexity). Residues 519-548 (ASDQHIVDVVLKMIQEQLAEVAVSAKREAL) form a nonhelical region 3 (NC3) region. The interval 549–631 (GAAGMVGLPG…PGLPGRPGQA (83 aa)) is triple-helical region 2 (COL2). A disordered region spans residues 553–664 (MVGLPGPPGP…GPVGLPGFCE (112 aa)). Residues 598 to 610 (KRGEKGDRGEMGH) are compositionally biased toward basic and acidic residues. Residues 632 to 633 (IN) form a nonhelical region 2 (NC2) region. Residues 634–663 (GKDGDRGSPGAPGEAGRPGRPGPVGLPGFC) are triple-helical region 1 (COL1). The segment at 664–688 (EPAACLGASAYTSARLTEPGSIKGP) is nonhelical region 1 (NC1).

The protein belongs to the fibril-associated collagens with interrupted helices (FACIT) family. In terms of assembly, heterotrimer of an alpha 1(IX), an alpha 2(IX) and an alpha 3(IX) chain. The chains are linked to each other by interchain disulfide bonds. Trimers are also cross-linked via hydroxylysines. Post-translationally, covalently linked to the telopeptides of type II collagen by lysine-derived cross-links. In terms of processing, prolines at the third position of the tripeptide repeating unit (G-X-Y) are hydroxylated in some or all of the chains.

Its subcellular location is the secreted. It is found in the extracellular space. The protein resides in the extracellular matrix. In terms of biological role, structural component of hyaline cartilage and vitreous of the eye. The chain is Collagen alpha-2(IX) chain (Col9a2) from Mus musculus (Mouse).